A 263-amino-acid chain; its full sequence is ATP synthase subunit a (263 aa).

6 helical membrane-spanning segments follow: residues Val26 to Ser46, Val86 to Ile106, Asp130 to Ile150, Pro166 to Ala186, Leu195 to Ala215, and Leu229 to Leu249.

This sequence belongs to the ATPase A chain family. As to quaternary structure, F-type ATPases have 2 components, CF(1) - the catalytic core - and CF(0) - the membrane proton channel. CF(1) has five subunits: alpha(3), beta(3), gamma(1), delta(1), epsilon(1). CF(0) has three main subunits: a(1), b(2) and c(9-12). The alpha and beta chains form an alternating ring which encloses part of the gamma chain. CF(1) is attached to CF(0) by a central stalk formed by the gamma and epsilon chains, while a peripheral stalk is formed by the delta and b chains.

It localises to the cell inner membrane. Functionally, key component of the proton channel; it plays a direct role in the translocation of protons across the membrane. This chain is ATP synthase subunit a, found in Glaesserella parasuis serovar 5 (strain SH0165) (Haemophilus parasuis).